Consider the following 325-residue polypeptide: Terpene synthase 11 (325 aa).

A DDxx(x)D/E motif motif is present at residues 97 to 102; sequence DDEYLE. The short motif at 227–235 is the NDxxSxxxD/E motif element; the sequence is NDIYSFVKE.

The protein belongs to the terpene synthase family.

The catalysed reaction is (2E,6E)-farnesyl diphosphate = (E)-beta-farnesene + diphosphate. It catalyses the reaction (2E,6E)-farnesyl diphosphate = (3E,6E)-alpha-farnesene + diphosphate. The enzyme catalyses geranylgeranyl diphosphate + H2O = (S)-(+)-nephthenol + diphosphate. In terms of biological role, terpene synthase that converts its substrate farnesyl diphosphate (FPP) into the sesquiterpenes (E)-beta-farnesene and (E,E)-alpha-farnesene. TPS11 also converts geranylgeranyl diphosphate (GGPP) into the diterpene (S)-nephthenol. This is Terpene synthase 11 from Dictyostelium purpureum (Slime mold).